A 144-amino-acid chain; its full sequence is Large ribosomal subunit protein uL13 (144 aa).

Belongs to the universal ribosomal protein uL13 family. As to quaternary structure, part of the 50S ribosomal subunit.

In terms of biological role, this protein is one of the early assembly proteins of the 50S ribosomal subunit, although it is not seen to bind rRNA by itself. It is important during the early stages of 50S assembly. This Moorella thermoacetica (strain ATCC 39073 / JCM 9320) protein is Large ribosomal subunit protein uL13.